A 610-amino-acid chain; its full sequence is tRNA uridine 5-carboxymethylaminomethyl modification enzyme MnmG (610 aa).

14–19 contacts FAD; sequence GAGHAG. 274–288 is an NAD(+) binding site; the sequence is GPRYCPSIEDKIVKF.

It belongs to the MnmG family. In terms of assembly, homodimer. Heterotetramer of two MnmE and two MnmG subunits. FAD serves as cofactor.

It localises to the cytoplasm. Its function is as follows. NAD-binding protein involved in the addition of a carboxymethylaminomethyl (cmnm) group at the wobble position (U34) of certain tRNAs, forming tRNA-cmnm(5)s(2)U34. This Chlamydia muridarum (strain MoPn / Nigg) protein is tRNA uridine 5-carboxymethylaminomethyl modification enzyme MnmG.